The sequence spans 300 residues: Dihydroorotate dehydrogenase B (NAD(+)), catalytic subunit (300 aa).

FMN is bound by residues S20 and 44–45 (KS). Substrate-binding positions include K44, 68-72 (NAMGL), and N122. N122 contacts FMN. Residue C125 is the Nucleophile of the active site. The FMN site is built by K160 and I186. A substrate-binding site is contributed by 187–188 (NT). FMN is bound by residues G212, 238–239 (GG), and 260–261 (GT).

Belongs to the dihydroorotate dehydrogenase family. Type 1 subfamily. As to quaternary structure, heterotetramer of 2 PyrK and 2 PyrD type B subunits. FMN is required as a cofactor.

The protein localises to the cytoplasm. The catalysed reaction is (S)-dihydroorotate + NAD(+) = orotate + NADH + H(+). The protein operates within pyrimidine metabolism; UMP biosynthesis via de novo pathway; orotate from (S)-dihydroorotate (NAD(+) route): step 1/1. In terms of biological role, catalyzes the conversion of dihydroorotate to orotate with NAD(+) as electron acceptor. This is Dihydroorotate dehydrogenase B (NAD(+)), catalytic subunit (pyrD) from Pyrococcus furiosus (strain ATCC 43587 / DSM 3638 / JCM 8422 / Vc1).